We begin with the raw amino-acid sequence, 112 residues long: MNKNMAGILSAAAVLTMLAGCTAYDRTKDQFVQPVVKDVKKGMSRAQVAQIAGKPSSEVSMIHARGTCQTYILGQRDGKAETYFVALDDTGHVINSGYQTCAEYDTDPQAAK.

An N-terminal signal peptide occupies residues 1–20 (MNKNMAGILSAAAVLTMLAG). The N-palmitoyl cysteine moiety is linked to residue Cys-21. The S-diacylglycerol cysteine moiety is linked to residue Cys-21.

It localises to the cell inner membrane. This chain is Osmotically-inducible putative lipoprotein OsmE (osmE), found in Escherichia coli O157:H7.